The chain runs to 502 residues: ATP synthase subunit alpha (502 aa).

Position 169–176 (169–176 (GDRQTGKT)) interacts with ATP.

This sequence belongs to the ATPase alpha/beta chains family. In terms of assembly, F-type ATPases have 2 components, CF(1) - the catalytic core - and CF(0) - the membrane proton channel. CF(1) has five subunits: alpha(3), beta(3), gamma(1), delta(1), epsilon(1). CF(0) has three main subunits: a(1), b(2) and c(9-12). The alpha and beta chains form an alternating ring which encloses part of the gamma chain. CF(1) is attached to CF(0) by a central stalk formed by the gamma and epsilon chains, while a peripheral stalk is formed by the delta and b chains.

Its subcellular location is the cell inner membrane. The catalysed reaction is ATP + H2O + 4 H(+)(in) = ADP + phosphate + 5 H(+)(out). Its function is as follows. Produces ATP from ADP in the presence of a proton gradient across the membrane. The alpha chain is a regulatory subunit. This is ATP synthase subunit alpha from Oleidesulfovibrio alaskensis (strain ATCC BAA-1058 / DSM 17464 / G20) (Desulfovibrio alaskensis).